The primary structure comprises 74 residues: UPF0435 protein ABC2298 (74 aa).

This sequence belongs to the UPF0435 family.

In Shouchella clausii (strain KSM-K16) (Alkalihalobacillus clausii), this protein is UPF0435 protein ABC2298.